The chain runs to 209 residues: Outer-membrane lipoprotein LolB (209 aa).

The signal sequence occupies residues 1–17 (MKKSTLLFSLMAMALSG). Residue cysteine 18 is the site of N-palmitoyl cysteine attachment. The S-diacylglycerol cysteine moiety is linked to residue cysteine 18.

The protein belongs to the LolB family. Monomer.

The protein localises to the cell outer membrane. Plays a critical role in the incorporation of lipoproteins in the outer membrane after they are released by the LolA protein. This Haemophilus ducreyi (strain 35000HP / ATCC 700724) protein is Outer-membrane lipoprotein LolB.